The chain runs to 263 residues: uncharacterized protein (263 aa).

Residues Thr-6–Lys-121 form the Response regulatory domain. A 4-aspartylphosphate modification is found at Asp-58. The 106-residue stretch at Ile-158 to Met-263 folds into the HTH LytTR-type domain.

This is an uncharacterized protein from Vibrio parahaemolyticus serotype O3:K6 (strain RIMD 2210633).